A 77-amino-acid polypeptide reads, in one-letter code: Mu-conotoxin BuIIIA (77 aa).

Positions 1 to 22 (MMSKLGVLLTICLLLFPLFALP) are cleaved as a signal peptide. Residues 23 to 51 (QDGDQPADRPAERMQDDISSEQNSLLEKR) constitute a propeptide that is removed on maturation. Residues 26 to 46 (DQPADRPAERMQDDISSEQNS) are disordered. The segment covering 28–38 (PADRPAERMQD) has biased composition (basic and acidic residues). 3 disulfide bridges follow: cysteine 56–cysteine 67, cysteine 57–cysteine 73, and cysteine 63–cysteine 74. Residue cysteine 74 is modified to Cysteine amide.

Belongs to the conotoxin M superfamily. In terms of tissue distribution, expressed by the venom duct.

It localises to the secreted. In terms of biological role, mu-conotoxins block voltage-gated sodium channels (Nav). This synthetic toxin potently blocks rNav1.2/SCN2A, and rNav1.4/SCN4A. It also moderately blocks rNav1.1/SCN1A, rNav1.3/SCN3A, rNav1.5/SCN5A, and mNav1.6/SCN8A. The inhibition is reversible. This is Mu-conotoxin BuIIIA from Conus bullatus (Bubble cone).